A 271-amino-acid chain; its full sequence is Short-chain dehydrogenase/reductase SAT3 (271 aa).

NADP(+) is bound by residues Ser-17, Asp-40, and Asn-67. The Proton donor role is filled by Ser-153. NADP(+)-binding residues include Tyr-168, Lys-172, and Ser-203. Tyr-168 acts as the Proton acceptor in catalysis. Lys-172 acts as the Lowers pKa of active site Tyr in catalysis.

Belongs to the short-chain dehydrogenases/reductases (SDR) family.

It participates in mycotoxin biosynthesis. Its function is as follows. Short-chain dehydrogenase/reductase; part of the satratoxin SC1 cluster involved in the biosynthesis of satratoxins, trichothecene mycotoxins that are associated with human food poisonings. Satratoxins are suggested to be made by products of multiple gene clusters (SC1, SC2 and SC3) that encode 21 proteins in all, including polyketide synthases, acetyltransferases, and other enzymes expected to modify the trichothecene skeleton. SC1 encodes 10 proteins, SAT1 to SAT10. The largest are SAT8, which encodes a putative polyketide synthase (PKS) with a conventional non-reducing architecture, and SAT10, a putative protein containing four ankyrin repeats and thus may be involved in protein scaffolding. The putative short-chain reductase SAT3 may assist the PKS in some capacity. SAT6 contains a secretory lipase domain and acts probably as a trichothecene esterase. SAT5 encodes a putative acetyltransferase, and so, with SAT6, may affect endogenous protection from toxicity. The probable transcription factor SAT9 may regulate the expression of the SC1 cluster. SC2 encodes proteins SAT11 to SAT16, the largest of which encodes the putative reducing PKS SAT13. SAT11 is a cytochrome P450 monooxygenase, while SAT14 and SAT16 are probable acetyltransferases. The SC2 cluster may be regulated by the transcription factor SAT15. SC3 is a small cluster that encodes 5 proteins, SAT17 to SAT21. SAT21 is a putative MFS-type transporter which may have a role in exporting secondary metabolites. The four other proteins putatively encoded in SC3 include the taurine hydroxylase-like protein SAT17, the O-methyltransferase SAT18, the acetyltransferase SAT19, and the Cys6-type zinc finger SAT20, the latter being probably involved in regulation of SC3 expression. The chain is Short-chain dehydrogenase/reductase SAT3 from Stachybotrys chartarum (strain CBS 109288 / IBT 7711) (Toxic black mold).